The chain runs to 376 residues: Thymidine kinase (376 aa).

The disordered stretch occupies residues 1-39; the sequence is MASYPCHQHASAFDQAARSRGHSNRRTALRPRRQQEATE. Over residues 19–32 the composition is skewed to basic residues; sequence SRGHSNRRTALRPR. 56–63 is an ATP binding site; sequence GPHGMGKT. Residue E83 is the Proton acceptor of the active site. Positions 101 and 125 each coordinate substrate. R216 is a binding site for ATP. R222 is a binding site for substrate.

It belongs to the herpesviridae thymidine kinase family. As to quaternary structure, homodimer.

It carries out the reaction thymidine + ATP = dTMP + ADP + H(+). Catalyzes the transfer of the gamma-phospho group of ATP to thymidine to generate dTMP in the salvage pathway of pyrimidine synthesis. The dTMP serves as a substrate for DNA polymerase during viral DNA replication. Allows the virus to be reactivated and to grow in non-proliferative cells lacking a high concentration of phosphorylated nucleic acid precursors. The polypeptide is Thymidine kinase (Human herpesvirus 1 (strain CL101) (HHV-1)).